A 205-amino-acid polypeptide reads, in one-letter code: MATDLKLVVGLGNPGAKYAGTRHNIGFMALELLGERSGFSFRQQAKLHGLAADTGVGEQRLRLLMPQTYMNDSGRAIRAALDWFGLEPHQLLVLVDDMDLPLGRLRLRAQGSAGGHNGLRSTIQHLGTQAFPRLRIGIGAPAENPAERRVRTVSHVLGPFSKVEQPCVGAVLDAVLDGIQRLQRQSFERAGTWINGFRYDLEPVD.

Tyr18 serves as a coordination point for tRNA. His23 (proton acceptor) is an active-site residue. The tRNA site is built by Tyr69, Asn71, and Asn117.

This sequence belongs to the PTH family. Monomer.

The protein resides in the cytoplasm. The catalysed reaction is an N-acyl-L-alpha-aminoacyl-tRNA + H2O = an N-acyl-L-amino acid + a tRNA + H(+). In terms of biological role, hydrolyzes ribosome-free peptidyl-tRNAs (with 1 or more amino acids incorporated), which drop off the ribosome during protein synthesis, or as a result of ribosome stalling. Functionally, catalyzes the release of premature peptidyl moieties from peptidyl-tRNA molecules trapped in stalled 50S ribosomal subunits, and thus maintains levels of free tRNAs and 50S ribosomes. The sequence is that of Peptidyl-tRNA hydrolase from Synechococcus sp. (strain CC9605).